We begin with the raw amino-acid sequence, 312 residues long: tRNA uridine(34) hydroxylase (312 aa).

The Rhodanese domain occupies 130–225 (RGDEVVFFDG…YGEQFGNKGL (96 aa)). Cys185 acts as the Cysteine persulfide intermediate in catalysis.

The protein belongs to the TrhO family.

The catalysed reaction is uridine(34) in tRNA + AH2 + O2 = 5-hydroxyuridine(34) in tRNA + A + H2O. In terms of biological role, catalyzes oxygen-dependent 5-hydroxyuridine (ho5U) modification at position 34 in tRNAs. This is tRNA uridine(34) hydroxylase from Corynebacterium glutamicum (strain R).